Here is a 147-residue protein sequence, read N- to C-terminus: Putative HTH-type transcriptional regulator slr0846 (147 aa).

Residues lysine 2 to tyrosine 130 enclose the HTH rrf2-type domain.

The sequence is that of Putative HTH-type transcriptional regulator slr0846 from Synechocystis sp. (strain ATCC 27184 / PCC 6803 / Kazusa).